A 315-amino-acid chain; its full sequence is Olfactory receptor 4E1 (315 aa).

The Extracellular segment spans residues 1-33; the sequence is MEEAILLNQTSLVTYFRLRGLSVNHKARIAMFS. N-linked (GlcNAc...) asparagine glycosylation is present at Asn-8. Residues 34-54 form a helical membrane-spanning segment; that stretch reads MFLIFYVLTLIGNVLIVITII. Over 55–61 the chain is Cytoplasmic; sequence YDHRLHT. Residues 62-82 traverse the membrane as a helical segment; that stretch reads PMYFFLSNLSFIDVCHSTVTV. Topologically, residues 83–101 are extracellular; it reads PKMLRDVWSEEKLISFDAC. A disulfide bridge links Cys-101 with Cys-183. A helical membrane pass occupies residues 102–122; it reads VTQMFFLHLFACTEIFLLTVM. The Cytoplasmic portion of the chain corresponds to 123-143; it reads AYDRYVAICKPLQYMIVMNWK. The helical transmembrane segment at 144–164 threads the bilayer; the sequence is VCVLLAVALWTGGTIHSIALT. The Extracellular segment spans residues 165–208; it reads SLTIKLPYCGPDEIDNFFCDVPQVIKLACIDTHVIEILIVSNSG. Residues 209 to 229 traverse the membrane as a helical segment; sequence LISVVCFVVLVVSYAVILVSL. Residues 230–240 are Cytoplasmic-facing; that stretch reads RQQISKGKRKA. The helical transmembrane segment at 241-261 threads the bilayer; sequence LSTCAAHLTVVTLFLGHCIFI. Residues 262–272 are Extracellular-facing; it reads YSRPSTSLPED. Residues 273–293 traverse the membrane as a helical segment; sequence KVVSVFFTAVTPLLNPIIYTL. Residues 294-315 are Cytoplasmic-facing; that stretch reads RNEEMKSALNKLVGRKERKEEK.

Belongs to the G-protein coupled receptor 1 family.

The protein resides in the cell membrane. Functionally, odorant receptor. The protein is Olfactory receptor 4E1 (OR4E1) of Homo sapiens (Human).